Reading from the N-terminus, the 468-residue chain is Ribulose bisphosphate carboxylase large chain (468 aa).

K5 is subject to N6,N6,N6-trimethyllysine. Residues N114 and T164 each contribute to the substrate site. Residue K166 is the Proton acceptor of the active site. K168 serves as a coordination point for substrate. Mg(2+) is bound by residues K192, D194, and E195. An N6-carboxylysine modification is found at K192. Residue H285 is the Proton acceptor of the active site. Residues R286, H318, and S370 each coordinate substrate.

This sequence belongs to the RuBisCO large chain family. Type I subfamily. As to quaternary structure, heterohexadecamer of 8 large chains and 8 small chains; disulfide-linked. The disulfide link is formed within the large subunit homodimers. Requires Mg(2+) as cofactor. Post-translationally, the disulfide bond which can form in the large chain dimeric partners within the hexadecamer appears to be associated with oxidative stress and protein turnover.

The protein localises to the plastid. It localises to the chloroplast. The enzyme catalyses 2 (2R)-3-phosphoglycerate + 2 H(+) = D-ribulose 1,5-bisphosphate + CO2 + H2O. It catalyses the reaction D-ribulose 1,5-bisphosphate + O2 = 2-phosphoglycolate + (2R)-3-phosphoglycerate + 2 H(+). Its function is as follows. RuBisCO catalyzes two reactions: the carboxylation of D-ribulose 1,5-bisphosphate, the primary event in carbon dioxide fixation, as well as the oxidative fragmentation of the pentose substrate in the photorespiration process. Both reactions occur simultaneously and in competition at the same active site. In Salvia divinorum (Maria pastora), this protein is Ribulose bisphosphate carboxylase large chain.